The chain runs to 496 residues: Probable cytosol aminopeptidase (496 aa).

2 residues coordinate Mn(2+): Lys-267 and Asp-272. The active site involves Lys-279. Mn(2+) is bound by residues Asp-290, Asp-349, and Glu-351. Arg-353 is a catalytic residue.

This sequence belongs to the peptidase M17 family. It depends on Mn(2+) as a cofactor.

Its subcellular location is the cytoplasm. The enzyme catalyses Release of an N-terminal amino acid, Xaa-|-Yaa-, in which Xaa is preferably Leu, but may be other amino acids including Pro although not Arg or Lys, and Yaa may be Pro. Amino acid amides and methyl esters are also readily hydrolyzed, but rates on arylamides are exceedingly low.. It carries out the reaction Release of an N-terminal amino acid, preferentially leucine, but not glutamic or aspartic acids.. Functionally, presumably involved in the processing and regular turnover of intracellular proteins. Catalyzes the removal of unsubstituted N-terminal amino acids from various peptides. The sequence is that of Probable cytosol aminopeptidase from Methylobacillus flagellatus (strain ATCC 51484 / DSM 6875 / VKM B-1610 / KT).